A 186-amino-acid polypeptide reads, in one-letter code: UPF0397 protein SGO_0469 (186 aa).

Transmembrane regions (helical) follow at residues V14–T34, L50–L70, G77–L97, A119–I139, and V152–A172.

The protein belongs to the UPF0397 family.

The protein localises to the cell membrane. The chain is UPF0397 protein SGO_0469 from Streptococcus gordonii (strain Challis / ATCC 35105 / BCRC 15272 / CH1 / DL1 / V288).